Consider the following 275-residue polypeptide: Anthracycline biosynthesis protein DnrV (275 aa).

2 consecutive VOC domains span residues 8–136 and 150–263; these read APAW…VWRK and SVGW…VVEL.

Its pathway is antibiotic biosynthesis; daunorubicin biosynthesis. The protein operates within antibiotic biosynthesis; carminomycin biosynthesis. Functionally, involved in the biosynthesis of the anthracyclines carminomycin and daunorubicin (daunomycin) which are aromatic polyketide antibiotics that exhibit high cytotoxicity and are widely applied in the chemotherapy of a variety of cancers. In vivo, it acts jointly with DoxA in the conversion of 13-deoxycarminomycin and 13-deoxydaunorubicin to yield carminomycin and daunorubicin, respectively. In vitro, it also acts jointly with DoxA in the C-14 hydroxylation of daunorubicin to form doxorubicin, although this strain is not a doxorubicin producer. The chain is Anthracycline biosynthesis protein DnrV (dnrV) from Streptomyces peucetius.